A 126-amino-acid polypeptide reads, in one-letter code: Large ribosomal subunit protein bL17 (126 aa).

The protein belongs to the bacterial ribosomal protein bL17 family. In terms of assembly, part of the 50S ribosomal subunit. Contacts protein L32.

The polypeptide is Large ribosomal subunit protein bL17 (Magnetococcus marinus (strain ATCC BAA-1437 / JCM 17883 / MC-1)).